The primary structure comprises 222 residues: Probable transaldolase (222 aa).

Catalysis depends on Lys91, which acts as the Schiff-base intermediate with substrate.

The protein belongs to the transaldolase family. Type 3B subfamily.

It localises to the cytoplasm. The enzyme catalyses D-sedoheptulose 7-phosphate + D-glyceraldehyde 3-phosphate = D-erythrose 4-phosphate + beta-D-fructose 6-phosphate. Its pathway is carbohydrate degradation; pentose phosphate pathway; D-glyceraldehyde 3-phosphate and beta-D-fructose 6-phosphate from D-ribose 5-phosphate and D-xylulose 5-phosphate (non-oxidative stage): step 2/3. Transaldolase is important for the balance of metabolites in the pentose-phosphate pathway. The sequence is that of Probable transaldolase from Chlorobium chlorochromatii (strain CaD3).